The sequence spans 455 residues: Zinc finger and BTB domain-containing protein 8A.2 (455 aa).

The BTB domain occupies 24 to 92 (CDCHIMIDGH…MYSGKLNLSG (69 aa)). 2 consecutive C2H2-type zinc fingers follow at residues 299-321 (FKCP…LLCH) and 327-350 (YPCQ…RTIH).

The protein localises to the nucleus. May be involved in transcriptional regulation. The sequence is that of Zinc finger and BTB domain-containing protein 8A.2 (zbtb8a.2) from Xenopus tropicalis (Western clawed frog).